The sequence spans 783 residues: MNTTTYIGHCRISFFNISSQGFWENLKSPDVVFGYSLPLLEIQIILIFFCIVMSHMFLRCIGVSQIVSYMIAGLILGPQLFDILEKSSGKLSADPALDGTAALRCISVFGRLMFTFLMTVRTSRRVAFHSGKLPVVIGIVSFFAPLFSLSFLNLFTDNIDPHYMSLDKALAERTVIVITQSQILLPSTTYILLELKIINSELGRLALSASAINDMLGIFAMIVATTQATYIHVSHAIAYRDLVAVIIFFLIVFFVFKPMVQWIIDRTPEDKPVEDIYIHAVILTAFASAAYFVFFNMKYVLGPLIIGIIIPEGPPLGSALEAKFERLTMNVFLPISITFSAMRCDGLRILSQFTDIYFNIFLTLLILVIKLVACLTLCLYYKLPRSESLAVSLILSYKSFVEFVLYEAVLEEKFISQATYAFLILYSLLSAGIVPMVVRSMYDPKRKYVNYQKRDILHLEANSGLRILTCLHKPENVSETIAFLQLFSSPIHDFPIAVTVLHLVKLVGQINPIIVSHDKKLKRLHKNSYIHTANLAFRQFMQESLESVTVTTFTAFSHENLMHEDICTLALDRTTSMIVVPSGRKWTVDGMFESDDLAARQLNQSLLDRAPCSIGILVDRGQFSRKSYVTSKNRYNIDVGVLFIGGKDDREALSLVKRMKYNPRVRVTVIRLIFDHEIESEWDYILDNEGLKDLKSTESNEDILYTERIVTSVVEVVKAVQLLAEEYDLMVVGRDHDMTSQDLSGLTEWVELPELGVIGDLLAARDLNSKVSVLVVQQQQQQT.

12 helical membrane-spanning segments follow: residues Val31 to Ile51, Ile61 to Phe81, Ala101 to Val120, Val135 to Phe155, Val175 to Leu195, Leu205 to Thr225, Ala244 to Ile264, Ile276 to Phe295, Val300 to Ala322, Ile360 to Tyr380, Leu389 to Val409, and Ala418 to Val438.

The protein belongs to the monovalent cation:proton antiporter 2 (CPA2) transporter (TC 2.A.37) family. CHX (TC 2.A.37.4) subfamily. In terms of tissue distribution, specifically expressed in pollen.

It localises to the membrane. In terms of biological role, may operate as a cation/H(+) antiporter. The protein is Cation/H(+) antiporter 11 (CHX11) of Arabidopsis thaliana (Mouse-ear cress).